The primary structure comprises 356 residues: tRNA-specific 2-thiouridylase MnmA (356 aa).

Residues 6–13 and Leu-32 each bind ATP; that span reads GMSGGVDS. Cys-102 functions as the Nucleophile in the catalytic mechanism. Cys-102 and Cys-200 form a disulfide bridge. Gly-127 provides a ligand contact to ATP. The interaction with tRNA stretch occupies residues 150 to 152; the sequence is RDQ. The active-site Cysteine persulfide intermediate is the Cys-200. An interaction with tRNA region spans residues 302-303; that stretch reads RY.

Belongs to the MnmA/TRMU family.

It localises to the cytoplasm. The catalysed reaction is S-sulfanyl-L-cysteinyl-[protein] + uridine(34) in tRNA + AH2 + ATP = 2-thiouridine(34) in tRNA + L-cysteinyl-[protein] + A + AMP + diphosphate + H(+). Its function is as follows. Catalyzes the 2-thiolation of uridine at the wobble position (U34) of tRNA, leading to the formation of s(2)U34. The sequence is that of tRNA-specific 2-thiouridylase MnmA from Aquifex aeolicus (strain VF5).